A 628-amino-acid polypeptide reads, in one-letter code: WW domain-containing adapter protein with coiled-coil (628 aa).

Disordered regions lie at residues 1-130 (MVMY…DDWS), 152-338 (EKPK…PQSP), and 417-532 (NQSP…SARS). Basic and acidic residues predominate over residues 37 to 49 (SSDHRHDKMRDST). Residues 74–84 (GKAKSMHLHRV) show a composition bias toward basic residues. Positions 101 to 121 (NHSAIHSSNSHSSTPSKTSDS) are enriched in low complexity. A WW domain is found at 123–156 (YDPADDWSEHISSSGKKYYYNCRTEVSQWEKPKE). Basic and acidic residues-rich tracts occupy residues 152–168 (EKPKEWLEREQRQKETS) and 176–185 (PKDRDYRREA). Residues 199-213 (DTSTMLPQNILSQTS) are compositionally biased toward polar residues. Residues 214–227 (RHNDRDYRLPRTDS) are compositionally biased toward basic and acidic residues. 2 stretches are compositionally biased toward low complexity: residues 230–260 (SAAPVQQPVKAAVHPAAAPSTVPSSPFTVQP) and 299–331 (SDKSSCTTPSTSSAPGLNLSAAPPSSSSSTVPV). The span at 420–446 (PMSLTSDASSPRSYVSPRISTPQTNTV) shows a compositional bias: polar residues. A compositionally biased stretch (low complexity) spans 467 to 486 (GSKQGSSAQTASQQSSAADK). Positions 511-532 (PNHNSSTCASSTSAPQNSSARS) are enriched in polar residues. Residues 599 to 625 (QATLREQRILFLRQQIKELEKLKNQNS) are a coiled coil.

The protein localises to the nucleus. Acts as a linker between gene transcription and histone H2B monoubiquitination at 'Lys-120' (H2BK120ub1). Positive regulator of amino acid starvation-induced autophagy. Positively regulates MTOR activity. May negatively regulate the ubiquitin proteasome pathway. In Xenopus tropicalis (Western clawed frog), this protein is WW domain-containing adapter protein with coiled-coil (wac).